Reading from the N-terminus, the 365-residue chain is Probable G-protein coupled receptor 142 (365 aa).

At 1–66 the chain is on the extracellular side; sequence MHLNSNPNSY…WPESPERSPC (66 aa). N-linked (GlcNAc...) asparagine glycosylation occurs at N44. The chain crosses the membrane as a helical span at residues 67–87; sequence VAGIIPVIYYSVLLSLGLPVA. The Cytoplasmic portion of the chain corresponds to 88-102; the sequence is LARLAARTRKPSYHY. A helical transmembrane segment spans residues 103–123; it reads LLALTASDIVTQVIIVFVGFL. Residues 124–140 lie on the Extracellular side of the membrane; the sequence is LQGAVLARQVPQAVVRT. A helical membrane pass occupies residues 141–161; it reads ANILEFAANHASVWIAVLFTV. Residues 162-185 lie on the Cytoplasmic side of the membrane; it reads DRYNALCRPLRHRATSSPGRTHRA. Residues 186-206 form a helical membrane-spanning segment; that stretch reads IAAVIGVTLLTGIPFYWWLDV. At 207-224 the chain is on the extracellular side; it reads WRDADPPSTMDKLLKWAH. Residues 225–245 traverse the membrane as a helical segment; it reads CLIVYFIPCNVFLVTNSAIIL. At 246–264 the chain is on the cytoplasmic side; that stretch reads RLRKRGQRGLRPLVSKSTA. Residues 265 to 285 traverse the membrane as a helical segment; that stretch reads ILLGVTSLFALLWAPRIIVML. The Extracellular segment spans residues 286–304; the sequence is YHLYVAPVHRDWRVHLALD. The helical transmembrane segment at 305-325 threads the bilayer; that stretch reads IANMLAMLNTEVNFGLYCFIS. At 326–365 the chain is on the cytoplasmic side; it reads KTFRATVRQVICDVHMACALKSQPKQTVVELMLKSVGTEL.

Belongs to the G-protein coupled receptor 1 family.

The protein resides in the cell membrane. Its function is as follows. Orphan receptor. The sequence is that of Probable G-protein coupled receptor 142 (Gpr142) from Mus musculus (Mouse).